The chain runs to 378 residues: Erythronate-4-phosphate dehydrogenase (378 aa).

Substrate is bound by residues Ser-45 and Thr-66. 2 residues coordinate NAD(+): Asp-146 and Thr-175. The active site involves Arg-208. Residue Asp-232 coordinates NAD(+). Glu-237 is a catalytic residue. The active-site Proton donor is the His-254. Gly-257 is an NAD(+) binding site. Substrate is bound at residue Tyr-258.

The protein belongs to the D-isomer specific 2-hydroxyacid dehydrogenase family. PdxB subfamily. In terms of assembly, homodimer.

It localises to the cytoplasm. It catalyses the reaction 4-phospho-D-erythronate + NAD(+) = (R)-3-hydroxy-2-oxo-4-phosphooxybutanoate + NADH + H(+). Its pathway is cofactor biosynthesis; pyridoxine 5'-phosphate biosynthesis; pyridoxine 5'-phosphate from D-erythrose 4-phosphate: step 2/5. Functionally, catalyzes the oxidation of erythronate-4-phosphate to 3-hydroxy-2-oxo-4-phosphonooxybutanoate. This is Erythronate-4-phosphate dehydrogenase from Salmonella paratyphi A (strain ATCC 9150 / SARB42).